We begin with the raw amino-acid sequence, 279 residues long: Diaminopimelate epimerase 1 (279 aa).

Asn-13 and Asn-66 together coordinate substrate. Cys-75 functions as the Proton donor in the catalytic mechanism. Residues 76-77, Asn-164, Asn-197, and 215-216 each bind substrate; these read GN and ER. The active-site Proton acceptor is the Cys-224. 225–226 contributes to the substrate binding site; it reads GT.

Belongs to the diaminopimelate epimerase family. Homodimer.

The protein localises to the cytoplasm. The catalysed reaction is (2S,6S)-2,6-diaminopimelate = meso-2,6-diaminopimelate. Its pathway is amino-acid biosynthesis; L-lysine biosynthesis via DAP pathway; DL-2,6-diaminopimelate from LL-2,6-diaminopimelate: step 1/1. Catalyzes the stereoinversion of LL-2,6-diaminopimelate (L,L-DAP) to meso-diaminopimelate (meso-DAP), a precursor of L-lysine and an essential component of the bacterial peptidoglycan. This is Diaminopimelate epimerase 1 from Nostoc sp. (strain PCC 7120 / SAG 25.82 / UTEX 2576).